A 153-amino-acid polypeptide reads, in one-letter code: UPF0260 protein YcgN (153 aa).

This sequence belongs to the UPF0260 family.

The protein is UPF0260 protein YcgN of Salmonella dublin (strain CT_02021853).